A 70-amino-acid polypeptide reads, in one-letter code: Large ribosomal subunit protein bL28 (70 aa).

It belongs to the bacterial ribosomal protein bL28 family.

In Thermosipho melanesiensis (strain DSM 12029 / CIP 104789 / BI429), this protein is Large ribosomal subunit protein bL28.